A 474-amino-acid polypeptide reads, in one-letter code: MKIIHTAIEFAPVIKAGGLGDALYGLAKALAANHTTEVVIPLYPKLFTLPKEQDLCSIQKLSYFFAGEQEATAFSYFYEGIKVTLFKLDTQPELFENAETIYTSDDAFRFCAFSAAAASYIQKEGANIVHLHDWHTGLVAGLLKQQPCSQLQKIVLTLHNFGYRGYTTREILEASSLNEFYISQYQLFRDPQTCVLLKGALYCSDFVTTVSPTYAKEILEDYSDYEIHDAITARQHHLRGILNGIDTTIWGPETDPNLAKNYTKELFETPSIFFEAKAENKKALYERLGLSLEHSPCVCIISRIAEQKGPHFMKQAILHALENAYTLIIIGTCYGNQLHEEFANLQESLANSPNVRILLTYSDVLARQIFAAADMICIPSMFEPCGLTQMIGMRYGTVPLVRATGGLADTVANGINGFSFFNPHDFYEFRNMLLEAVTTYRTNHDKWQHIVRACLNFSSDLETAANKYLEIYKQ.

Position 15 (lysine 15) interacts with ADP-alpha-D-glucose.

This sequence belongs to the glycosyltransferase 1 family. Bacterial/plant glycogen synthase subfamily.

It carries out the reaction [(1-&gt;4)-alpha-D-glucosyl](n) + ADP-alpha-D-glucose = [(1-&gt;4)-alpha-D-glucosyl](n+1) + ADP + H(+). It participates in glycan biosynthesis; glycogen biosynthesis. Functionally, synthesizes alpha-1,4-glucan chains using ADP-glucose. This is Glycogen synthase from Chlamydia trachomatis serovar L2b (strain UCH-1/proctitis).